Consider the following 72-residue polypeptide: Translation initiation factor IF-1 (72 aa).

Residues 1 to 72 form the S1-like domain; sequence MTKEENIEMQ…SKGRIIFRSR (72 aa).

It belongs to the IF-1 family. In terms of assembly, component of the 30S ribosomal translation pre-initiation complex which assembles on the 30S ribosome in the order IF-2 and IF-3, IF-1 and N-formylmethionyl-tRNA(fMet); mRNA recruitment can occur at any time during PIC assembly.

Its subcellular location is the cytoplasm. Functionally, one of the essential components for the initiation of protein synthesis. Stabilizes the binding of IF-2 and IF-3 on the 30S subunit to which N-formylmethionyl-tRNA(fMet) subsequently binds. Helps modulate mRNA selection, yielding the 30S pre-initiation complex (PIC). Upon addition of the 50S ribosomal subunit IF-1, IF-2 and IF-3 are released leaving the mature 70S translation initiation complex. The protein is Translation initiation factor IF-1 of Wigglesworthia glossinidia brevipalpis.